An 867-amino-acid polypeptide reads, in one-letter code: Respiratory burst oxidase homolog protein B (867 aa).

Over residues 1–13 (MEIENTRDSDSMR) the composition is skewed to basic and acidic residues. The disordered stretch occupies residues 1–20 (MEIENTRDSDSMRGSRVGFS). Residues 1 to 322 (MEIENTRDSD…DYFIEDNWKR (322 aa)) lie on the Cytoplasmic side of the membrane. Residues Ser82 and Ser97 each carry the phosphoserine; by CPK modification. 2 EF-hand-like regions span residues 141-149 (AVNGMLTKS) and 175-186 (RCITSPAVTKDE). EF-hand domains follow at residues 198 to 233 (SFDA…SASA) and 242 to 277 (NSDE…APSH). 5 residues coordinate Ca(2+): Asp211, Asp213, Asp215, Arg217, and Glu222. A helical membrane pass occupies residues 323 to 343 (IWVMALWLSICAGLFTWKFIQ). The Extracellular portion of the chain corresponds to 344–358 (YKRRAVFDVMGYCVS). The chain crosses the membrane as a helical span at residues 359 to 379 (VAKGGAETTKFNMALVLLPVC). Residues 361-519 (KGGAETTKFN…LFVIVYVLFI (159 aa)) form the Ferric oxidoreductase domain. Topologically, residues 380–407 (RNTITWLRSRTKLGKIIPFDDNINFHKV) are cytoplasmic. A helical transmembrane segment spans residues 408 to 428 (IAFGIAVGVGLHAISHLTCDF). At 429-463 (PRLLHATDEEYEPMKPFFGDERPNNYWWFVKGTEG) the chain is on the extracellular side. The chain crosses the membrane as a helical span at residues 464–484 (WTGVVMVVLMIIAYVLAQPWF). At 485–506 (RRNRLNLPSTIKKLTGFNAFWY) the chain is on the cytoplasmic side. The helical transmembrane segment at 507 to 527 (SHHLFVIVYVLFIIHGYFLYL) threads the bilayer. At 528-686 (SKKWYKKTTW…APAQDYKKYD (159 aa)) the chain is on the extracellular side. The region spanning 558–681 (SGYKAVKILK…DGPYGAPAQD (124 aa)) is the FAD-binding FR-type domain. Residues 687–707 (VVLLVGLGIGATPLISIVKDV) form a helical membrane-spanning segment. Residues 708-867 (LNNIKQQKNI…TKFEFHKENF (160 aa)) lie on the Cytoplasmic side of the membrane.

The protein belongs to the RBOH (TC 5.B.1.3) family. Monomer and homodimer. Post-translationally, phosphorylation at Ser-82 and Ser-97 is required for full activity of RBOHB. Not phosphorylated at Ser-89. Phosphorylation at Ser-82 is induced by fungal elicitor treatment.

The protein localises to the cell membrane. Its activity is regulated as follows. Inhibited by diphenylene iodinium (DPI). Its function is as follows. Calcium-dependent NADPH oxidase that generates superoxide. Involved in the massive phase II oxidative burst induced by pathogen infection. This chain is Respiratory burst oxidase homolog protein B (RBOHB), found in Solanum tuberosum (Potato).